Consider the following 235-residue polypeptide: Large ribosomal subunit protein uL1 (235 aa).

The protein belongs to the universal ribosomal protein uL1 family. In terms of assembly, part of the 50S ribosomal subunit.

In terms of biological role, binds directly to 23S rRNA. The L1 stalk is quite mobile in the ribosome, and is involved in E site tRNA release. Protein L1 is also a translational repressor protein, it controls the translation of the L11 operon by binding to its mRNA. The sequence is that of Large ribosomal subunit protein uL1 from Mycolicibacterium smegmatis (strain ATCC 700084 / mc(2)155) (Mycobacterium smegmatis).